Reading from the N-terminus, the 503-residue chain is Xylan O-acetyltransferase 12 (503 aa).

The Cytoplasmic portion of the chain corresponds to 1–54 (MWSALFSHLREVHKRSGVKEEKLIMKSPAAAGEAAGCHKPQATATNKMTVLQSP). The chain crosses the membrane as a helical; Signal-anchor for type II membrane protein span at residues 55–77 (LGLRTILTSLVAFFIVVSSVSLL). Topologically, residues 78 to 503 (FDRSQDAQAQ…EFLYAYLMHK (426 aa)) are lumenal. Intrachain disulfides connect cysteine 153/cysteine 204, cysteine 175/cysteine 240, cysteine 184/cysteine 484, and cysteine 400/cysteine 480. N-linked (GlcNAc...) asparagine glycans are attached at residues asparagine 154, asparagine 164, asparagine 190, and asparagine 210. The short motif at 227 to 229 (GDS) is the GDS motif element. The active-site Nucleophile is the serine 229. Residues asparagine 256, asparagine 268, asparagine 373, asparagine 402, and asparagine 443 are each glycosylated (N-linked (GlcNAc...) asparagine). Aspartate 479 serves as the catalytic Proton donor. The DXXH motif motif lies at 479 to 482 (DCTH). Histidine 482 acts as the Proton acceptor in catalysis.

The protein belongs to the PC-esterase family. TBL subfamily.

Its subcellular location is the golgi apparatus membrane. Its function is as follows. Xylan acetyltransferase required for 2-O- and 3-O-monoacetylation of xylosyl residues in xylan. Catalyzes the 2-O-acetylation of xylan, followed by nonenzymatic acetyl migration to the O-3 position, resulting in products that are monoacetylated at both O-2 and O-3 positions. This chain is Xylan O-acetyltransferase 12, found in Oryza sativa subsp. japonica (Rice).